We begin with the raw amino-acid sequence, 203 residues long: Cbp/p300-interacting transactivator 1 (203 aa).

2 disordered regions span residues 1-24 (MPTM…DANQ) and 51-86 (TANG…PSFN). The segment covering 61 to 84 (PTSSSGSTSPIGSPTATPSSKPPS) has biased composition (low complexity). The Nuclear export signal motif lies at 168 to 177 (LMSLVVELGL).

This sequence belongs to the CITED family. In terms of assembly, homodimer. Binds to RBM14. Interacts (via N-terminus) with HSPA8; the interaction suppresses the association of CITED1 with p300/CBP and SMAD-mediated transcription transactivation. Interacts (via C-terminus) with TOX3 (via HGM box); the interaction increases estrogen-response element (ERE)-dependent transcription and protection against cell death. Interacts with ESR1; the interaction occurs in a estrogen-dependent manner. Interacts (unphosphorylated form preferentially and via C-terminus) with EP300. Interacts (via C-terminus) with CREBBP. Interacts with EGR2. Post-translationally, phosphorylated. Phosphorylation changes in a cell cycle-dependent manner and reduces its transcriptional cofactor activity. As to expression, expressed in calvarial osteoblasts. Expressed in nulliparous mammary epithelial cells; absent in pregnant mice and in lacting mammary glands. Also expressed in mammary tumors (at protein level). Expressed only in melanocytes and testis. Expressed at high levels in the strongly pigmented melanoma cells but at low levels in the weakly pigmented cells.

Its subcellular location is the nucleus. The protein localises to the cytoplasm. Transcriptional coactivator of the p300/CBP-mediated transcription complex. Enhances SMAD-mediated transcription by strengthening the functional link between the DNA-binding SMAD transcription factors and the p300/CBP transcription coactivator complex. Stimulates estrogen-dependent transactivation activity mediated by estrogen receptors signaling; stabilizes the interaction of estrogen receptor ESR1 and histone acetyltransferase EP300. Positively regulates TGF-beta signaling through its association with the SMAD/p300/CBP-mediated transcriptional coactivator complex. Induces transcription from estrogen-responsive promoters and protection against cell death. Potentiates EGR2-mediated transcriptional activation activity from the ERBB2 promoter. Acts as an inhibitor of osteoblastic mineralization through a cAMP-dependent parathyroid hormone receptor signaling. May play a role in pigmentation of melanocytes. Associates with chromatin to the estrogen-responsive TGF-alpha promoter region in a estrogen-dependent manner. This Mus musculus (Mouse) protein is Cbp/p300-interacting transactivator 1 (Cited1).